The primary structure comprises 125 residues: Fluoride-specific ion channel FluC (125 aa).

A run of 4 helical transmembrane segments spans residues 5 to 25, 33 to 53, 69 to 89, and 101 to 121; these read FVFI…LAGF, FFPF…GFLW, FVLV…LETG, and IVNL…GIVL. Residues glycine 76 and threonine 79 each contribute to the Na(+) site.

The protein belongs to the fluoride channel Fluc/FEX (TC 1.A.43) family.

The protein resides in the cell inner membrane. The catalysed reaction is fluoride(in) = fluoride(out). Its activity is regulated as follows. Na(+) is not transported, but it plays an essential structural role and its presence is essential for fluoride channel function. In terms of biological role, fluoride-specific ion channel. Important for reducing fluoride concentration in the cell, thus reducing its toxicity. The protein is Fluoride-specific ion channel FluC of Desulforapulum autotrophicum (strain ATCC 43914 / DSM 3382 / VKM B-1955 / HRM2) (Desulfobacterium autotrophicum).